The following is a 338-amino-acid chain: Ornithine carbamoyltransferase (338 aa).

Carbamoyl phosphate is bound by residues 56 to 59 (STRT), arginine 107, and 134 to 137 (HPTQ). L-ornithine-binding positions include asparagine 168, aspartate 232, and 236–237 (SM). Carbamoyl phosphate-binding positions include 274-275 (CL) and arginine 320.

This sequence belongs to the aspartate/ornithine carbamoyltransferase superfamily. OTCase family.

It localises to the cytoplasm. It carries out the reaction carbamoyl phosphate + L-ornithine = L-citrulline + phosphate + H(+). It functions in the pathway amino-acid degradation; L-arginine degradation via ADI pathway; carbamoyl phosphate from L-arginine: step 2/2. Its function is as follows. Reversibly catalyzes the transfer of the carbamoyl group from carbamoyl phosphate (CP) to the N(epsilon) atom of ornithine (ORN) to produce L-citrulline. The chain is Ornithine carbamoyltransferase from Buchnera aphidicola subsp. Acyrthosiphon pisum (strain 5A).